The primary structure comprises 317 residues: Melanocyte-stimulating hormone receptor (317 aa).

Residues 1-37 (MPMQGAQRKLLGSLNSTPTATSNLGLAANHTGAPCLE) are Extracellular-facing. Residue N29 is glycosylated (N-linked (GlcNAc...) asparagine). The helical transmembrane segment at 38–63 (VSIPDGLFLSLGLVSLVENVLVVAAI) threads the bilayer. Residues 64 to 72 (AKNRNLHSS) lie on the Cytoplasmic side of the membrane. Residues 73–93 (MYCFICCLALSDLLVSGSNML) form a helical membrane-spanning segment. Over 94–118 (ETAVILLLEAGALATRTSAVQRLHN) the chain is Extracellular. Residues 119–140 (TIDVLTCSSMLCSLCFLGAIAV) form a helical membrane-spanning segment. The Cytoplasmic segment spans residues 141–163 (DRYISIFYALRYHSIVTLPRTQR). Residues 164–183 (VIAAIWVASVLSSTLFITYY) form a helical membrane-spanning segment. Topologically, residues 184-191 (DHAAVLLC) are extracellular. The helical transmembrane segment at 192–211 (LVVFFLAMLVLMAVLYVHML) threads the bilayer. Topologically, residues 212–240 (ARACQHAHGIIRLHKRQSPAHQGFGLRGA) are cytoplasmic. Residues 241–266 (ATLTILLGIFFLCWGPFFLHLTLVVF) traverse the membrane as a helical segment. The Extracellular portion of the chain corresponds to 267-279 (CPQHLTCSCIFKN). Residues 280-300 (FKVFLTLIICNTIIDPLIYAF) form a helical membrane-spanning segment. The Cytoplasmic segment spans residues 301–317 (RSQELRRTLKEVLLCSW). Residue C315 is the site of S-palmitoyl cysteine attachment.

The protein belongs to the G-protein coupled receptor 1 family. In terms of assembly, interacts with MGRN1, but does not undergo MGRN1-mediated ubiquitination; this interaction competes with GNAS-binding and thus inhibits agonist-induced cAMP production. Interacts with OPN3; the interaction results in a decrease in MC1R-mediated cAMP signaling and ultimately a decrease in melanin production in melanocytes.

It localises to the cell membrane. Its function is as follows. Receptor for MSH (alpha, beta and gamma) and ACTH. The activity of this receptor is mediated by G proteins which activate adenylate cyclase. Mediates melanogenesis, the production of eumelanin (black/brown) and phaeomelanin (red/yellow), via regulation of cAMP signaling in melanocytes. In Saguinus imperator (Emperor tamarin), this protein is Melanocyte-stimulating hormone receptor (MC1R).